The chain runs to 476 residues: POC1 centriolar protein homolog B (476 aa).

WD repeat units follow at residues 16-55 (GHKA…RAYR), 58-97 (GHKD…KSSE), 100-139 (AHTA…FLYS), 142-181 (RHTH…CVNN), 183-223 (SDSV…LLQH), 226-265 (VHSC…LIYT), and 268-307 (GHTG…LHCK). Residues 429–468 (ALEHIMEQLNILTQTVSILEQRLSLTEDKLRDCLENQQKL) adopt a coiled-coil conformation.

The protein belongs to the WD repeat POC1 family. As to quaternary structure, interacts with POC1A. Interacts with FAM161A. Interacts with CEP44; the interaction is direct and recruits POC1B to centriolar microtubules. Forms a microtubule-associated complex with POC5, CETN2 and FAM161A. Interacts with CCDC15. In terms of processing, phosphorylated in mitotic cells that may be mediated by CDK1. As to expression, expressed in the retina.

The protein localises to the cytoplasm. Its subcellular location is the cytoskeleton. It is found in the microtubule organizing center. The protein resides in the centrosome. It localises to the centriole. The protein localises to the cilium basal body. Its subcellular location is the spindle pole. In terms of biological role, plays an important role in centriole assembly and/or stability and ciliogenesis. Involved in early steps of centriole duplication, as well as in the later steps of centriole length control. Acts in concert with POC1A to ensure centriole integrity and proper mitotic spindle formation. Required for primary cilia formation, ciliary length and also cell proliferation. Required for retinal integrity. Acts as a positive regulator of centriole elongation. This chain is POC1 centriolar protein homolog B (Poc1b), found in Mus musculus (Mouse).